Reading from the N-terminus, the 489-residue chain is Putative ABC transporter ATP-binding protein TDE_0282 (489 aa).

ABC transporter domains follow at residues 2-241 and 269-487; these read ITLR…SMKL and FAVK…MQLE. ATP-binding positions include 36 to 43 and 301 to 308; these read GASGCGKT and GENGAGKT.

This sequence belongs to the ABC transporter superfamily.

It is found in the cell inner membrane. Its function is as follows. Probably part of an ABC transporter complex. Responsible for energy coupling to the transport system. The sequence is that of Putative ABC transporter ATP-binding protein TDE_0282 from Treponema denticola (strain ATCC 35405 / DSM 14222 / CIP 103919 / JCM 8153 / KCTC 15104).